We begin with the raw amino-acid sequence, 241 residues long: Chloride intracellular channel protein 1 (241 aa).

Ala2 carries the N-acetylalanine modification. Residues 2-90 form a required for insertion into the membrane region; sequence AEEQPQVELF…EEFLEAVLCP (89 aa). Position 13 is an N6-acetyllysine (Lys13). Positions 24-27 match the G-site motif; the sequence is CPFS. A disulfide bridge links Cys24 with Cys59. The chain crosses the membrane as a helical span at residues 26–46; the sequence is FSQRLFMVLWLKGVTFNVTTV. The region spanning 93–233 is the GST C-terminal domain; sequence YPKLAALNPE…PDDEEIELAY (141 aa). Lys119 carries the N6-acetyllysine modification. Phosphoserine is present on Ser121. Position 131 is an N6-acetyllysine (Lys131). 2 positions are modified to phosphoserine: Ser156 and Ser211. A Phosphotyrosine modification is found at Tyr233.

This sequence belongs to the chloride channel CLIC family. Monomer. Homodimer (in vitro). Interacts with TRAPPC2. Dimerization requires a conformation change that leads to the exposure of a large hydrophobic surface. In vivo, this may lead to membrane insertion. Expressed in neonatal and adult cardiomyocytes (at protein level).

It localises to the nucleus. The protein localises to the nucleus membrane. It is found in the cytoplasm. Its subcellular location is the cell membrane. The protein resides in the endoplasmic reticulum. The catalysed reaction is L-dehydroascorbate + 2 glutathione = glutathione disulfide + L-ascorbate. It catalyses the reaction chloride(in) = chloride(out). The enzyme catalyses iodide(out) = iodide(in). It carries out the reaction thiocyanate(in) = thiocyanate(out). The catalysed reaction is nitrate(in) = nitrate(out). It catalyses the reaction bromide(in) = bromide(out). The enzyme catalyses fluoride(in) = fluoride(out). Its function is as follows. In the soluble state, catalyzes glutaredoxin-like thiol disulfide exchange reactions with reduced glutathione as electron donor. Reduces selenite and dehydroascorbate and may act as an antioxidant during oxidative stress response. Can insert into membranes and form voltage-dependent multi-ion conductive channels. Membrane insertion seems to be redox-regulated and may occur only under oxidizing conditions. Involved in regulation of the cell cycle. The protein is Chloride intracellular channel protein 1 of Rattus norvegicus (Rat).